A 263-amino-acid polypeptide reads, in one-letter code: Shikimate dehydrogenase (NADP(+)) (263 aa).

Shikimate contacts are provided by residues 16-18 (SKS) and Thr-65. Lys-69 (proton acceptor) is an active-site residue. The shikimate site is built by Asn-90 and Asp-105. Residues 125–129 (GSGGS) and Leu-208 contribute to the NADP(+) site. Shikimate is bound at residue Tyr-210. Gly-230 contacts NADP(+).

Belongs to the shikimate dehydrogenase family. As to quaternary structure, homodimer.

It carries out the reaction shikimate + NADP(+) = 3-dehydroshikimate + NADPH + H(+). The protein operates within metabolic intermediate biosynthesis; chorismate biosynthesis; chorismate from D-erythrose 4-phosphate and phosphoenolpyruvate: step 4/7. Involved in the biosynthesis of the chorismate, which leads to the biosynthesis of aromatic amino acids. Catalyzes the reversible NADPH linked reduction of 3-dehydroshikimate (DHSA) to yield shikimate (SA). The chain is Shikimate dehydrogenase (NADP(+)) from Helicobacter pylori (strain P12).